Consider the following 247-residue polypeptide: Probable enoyl-CoA hydratase echA6 (247 aa).

Belongs to the enoyl-CoA hydratase/isomerase family.

The catalysed reaction is a (3S)-3-hydroxyacyl-CoA = a (2E)-enoyl-CoA + H2O. It carries out the reaction a 4-saturated-(3S)-3-hydroxyacyl-CoA = a (3E)-enoyl-CoA + H2O. Its function is as follows. Could possibly oxidize fatty acids using specific components. In Mycobacterium leprae (strain TN), this protein is Probable enoyl-CoA hydratase echA6 (echA6).